We begin with the raw amino-acid sequence, 35 residues long: Ranatuerin-2SPb (35 aa).

Cys-28 and Cys-33 are joined by a disulfide.

In terms of tissue distribution, expressed by the skin glands.

It localises to the secreted. Its function is as follows. Antibacterial activity against Gram-positive bacterium S.aureus. Shows no detectable hemolytic activity towards human erythrocytes. This is Ranatuerin-2SPb from Lithobates septentrionalis (Mink frog).